The primary structure comprises 1196 residues: [NU+] prion formation protein 1 (1196 aa).

Disordered regions lie at residues Met1–Tyr49 and Thr103–Ser125. Polar residues-rich tracts occupy residues Gly39–Tyr49 and Thr103–Gln113. The segment covering Ser114 to Ser125 has biased composition (low complexity). Residue Ser443 is modified to Phosphoserine. 2 consecutive ABC transporter domains span residues Ile570–Leu786 and Ala812–Val1129. Residues Gly604 to Ser611 and Gly846 to Ser853 contribute to the ATP site. Residues Arg942–Tyr1003 enclose the Chromo domain. Disordered regions lie at residues Ala1137 to Leu1166 and Glu1177 to Asp1196. Position 1191 is a phosphothreonine (Thr1191).

This sequence belongs to the ABC transporter superfamily. ABCF family. EF3 subfamily.

The protein localises to the cytoplasm. The protein resides in the nucleus. Its function is as follows. May be involved in the mRNA export process. Forms the [NU+] prion and induces [PSI+] prion formation. This chain is [NU+] prion formation protein 1 (NEW1), found in Saccharomyces cerevisiae (strain ATCC 204508 / S288c) (Baker's yeast).